The following is a 159-amino-acid chain: Transmembrane protein 88 (159 aa).

A run of 2 helical transmembrane segments spans residues 43 to 63 and 88 to 108; these read LLLL…MLGF and FTAL…LALA. A disordered region spans residues 137-159; sequence PQPRQIRASPGSQAVPTSGKVWV.

The protein belongs to the TMEM88 family. Interacts (via C-terminus) with DVL1.

The protein resides in the cell membrane. In terms of biological role, inhibits the Wnt/beta-catenin signaling pathway. Crucial for heart development and acts downstream of GATA factors in the pre-cardiac mesoderm to specify lineage commitment of cardiomyocyte development. The polypeptide is Transmembrane protein 88 (TMEM88) (Homo sapiens (Human)).